We begin with the raw amino-acid sequence, 705 residues long: Elongation factor G 2 (705 aa).

A tr-type G domain is found at 8 to 288; the sequence is ERYRNIGISA…AVIDYLPSPA (281 aa). GTP-binding positions include 17-24, 86-90, and 140-143; these read AHIDAGKT, DTPGH, and NKMD.

It belongs to the TRAFAC class translation factor GTPase superfamily. Classic translation factor GTPase family. EF-G/EF-2 subfamily.

It is found in the cytoplasm. Functionally, catalyzes the GTP-dependent ribosomal translocation step during translation elongation. During this step, the ribosome changes from the pre-translocational (PRE) to the post-translocational (POST) state as the newly formed A-site-bound peptidyl-tRNA and P-site-bound deacylated tRNA move to the P and E sites, respectively. Catalyzes the coordinated movement of the two tRNA molecules, the mRNA and conformational changes in the ribosome. This Bordetella parapertussis (strain 12822 / ATCC BAA-587 / NCTC 13253) protein is Elongation factor G 2.